Reading from the N-terminus, the 459-residue chain is Acetyltransferase pigO (459 aa).

The protein belongs to the trichothecene O-acetyltransferase family.

The protein operates within secondary metabolite biosynthesis. Functionally, acetyltransferase; part of the gene cluster that mediates the biosynthesis of azaphilone pigments (MonAzPs), a complex mixture of compounds with a common azaphilone skeleton very widely used as food colorants. PigM and pigO are involved in the elimination of the omega-1 alcohol with pigM acting as an O-acetyltransferase that synthesizes the O-11 acetyl intermediate whereas pigO eliminates acetic acid to yield an intermediate with a C10(11) double bond. The first step of the pathway is performed by the nrPKS pigA that forms the hexaketide precursor from successive condensations of five malonyl-CoA units, with a simple acetyl-CoA starter unit. The role of esterase pigG is not clear, but it may play at most a supplementary role in the formation of the benzaldehyde produced by the pigA nrPKS. This very reactive benzaldehyde is intercepted by the pigC ketoreductase that to provide the first stable enzyme-free MonAzPs intermediate, 6-(4-hydroxy-2-oxopentyl)-3-methyl-2,4-dioxocyclohexane carbaldehyde, also known as M7PKS-1. The FAD-dependent monooxygenase pigN hydroxylates M7PKS-1 at C-4, which triggers the formation of the pyran ring. PigJ, pigK and pigD are involved in the acetylation of the pyran ring. PigJ and pigK form the two subunits of a dedicated fungal FAS that produces the side chain fatty acyl moiety of MonAzPs and pigD transfers the fatty acyl chain to the C-4 alcohol. PigM and pigO are involved in the elimination of the omega-1 alcohol. PigM acts as an O-acetyltransferase that synthesizes the putative O-11 acetyl intermediate whereas pigO eliminates acetic acid to yield an intermediate with a C10(11) double bond. The dehydration of the C-11 alcohol followed by the reduction of the C6(7) double bond by the NAD(P)H-dependent oxidoreductase pigE increases the electrophilicity of the C-5 ketone of the resulting acyl benzopyran. This in turn sets up the C-5 ketone for an intramolecular Knoevenagel aldol condensation with the C-20 enol of the side chain. This condensation affords the characteristic linear tricyclic carbon skeletons of the yellow pigments that serve as the common precursors for the classical yellow pigments monascin and ankaflavin, orange pigments rubopunctatin and monascorubrin, and red pigments ribropunctamine and monascorubramine. The FAD-dependent oxidoreductase pigF is especially invoved in the biosynthesis of orange and red pigments via desaturation of C6(7). The chain is Acetyltransferase pigO from Monascus ruber (Mold).